A 512-amino-acid polypeptide reads, in one-letter code: Cytoplasmic tRNA 2-thiolation protein 2-B (512 aa).

The interval 196-215 is disordered; sequence VTDSDSPGSSDKMYQSTCSR. Polar residues predominate over residues 199 to 214; sequence SDSPGSSDKMYQSTCS.

The protein belongs to the CTU2/NCS2 family.

It localises to the cytoplasm. Its pathway is tRNA modification; 5-methoxycarbonylmethyl-2-thiouridine-tRNA biosynthesis. Its function is as follows. Plays a central role in 2-thiolation of mcm(5)S(2)U at tRNA wobble positions of tRNA(Lys), tRNA(Glu) and tRNA(Gln). May act by forming a heterodimer with ctu1/atpbd3 that ligates sulfur from thiocarboxylated urm1 onto the uridine of tRNAs at wobble position. The protein is Cytoplasmic tRNA 2-thiolation protein 2-B (ctu2-b) of Xenopus laevis (African clawed frog).